We begin with the raw amino-acid sequence, 161 residues long: Leucine-rich colipase-like protein 1 (161 aa).

Positions 1 to 25 (MSVSVWPPLLLLLLLLLLWAVPTFQ) are cleaved as a signal peptide.

The chain is Leucine-rich colipase-like protein 1 (Lrcol1) from Mus musculus (Mouse).